Here is a 340-residue protein sequence, read N- to C-terminus: Branched-chain-amino-acid aminotransferase (340 aa).

Lys187 carries the post-translational modification N6-(pyridoxal phosphate)lysine.

The protein belongs to the class-IV pyridoxal-phosphate-dependent aminotransferase family. Pyridoxal 5'-phosphate serves as cofactor.

The catalysed reaction is L-leucine + 2-oxoglutarate = 4-methyl-2-oxopentanoate + L-glutamate. It carries out the reaction L-isoleucine + 2-oxoglutarate = (S)-3-methyl-2-oxopentanoate + L-glutamate. It catalyses the reaction L-valine + 2-oxoglutarate = 3-methyl-2-oxobutanoate + L-glutamate. Its pathway is amino-acid biosynthesis; L-isoleucine biosynthesis; L-isoleucine from 2-oxobutanoate: step 4/4. The protein operates within amino-acid biosynthesis; L-leucine biosynthesis; L-leucine from 3-methyl-2-oxobutanoate: step 4/4. It participates in amino-acid biosynthesis; L-valine biosynthesis; L-valine from pyruvate: step 4/4. Functionally, acts on leucine, isoleucine and valine. This is Branched-chain-amino-acid aminotransferase (ilvE) from Helicobacter pylori (strain J99 / ATCC 700824) (Campylobacter pylori J99).